A 443-amino-acid polypeptide reads, in one-letter code: ATP-dependent protease ATPase subunit HslU (443 aa).

ATP contacts are provided by residues isoleucine 19, 61 to 66 (GVGKTE), aspartate 256, glutamate 321, and arginine 393.

This sequence belongs to the ClpX chaperone family. HslU subfamily. In terms of assembly, a double ring-shaped homohexamer of HslV is capped on each side by a ring-shaped HslU homohexamer. The assembly of the HslU/HslV complex is dependent on binding of ATP.

The protein resides in the cytoplasm. In terms of biological role, ATPase subunit of a proteasome-like degradation complex; this subunit has chaperone activity. The binding of ATP and its subsequent hydrolysis by HslU are essential for unfolding of protein substrates subsequently hydrolyzed by HslV. HslU recognizes the N-terminal part of its protein substrates and unfolds these before they are guided to HslV for hydrolysis. The chain is ATP-dependent protease ATPase subunit HslU from Ralstonia nicotianae (strain ATCC BAA-1114 / GMI1000) (Ralstonia solanacearum).